Consider the following 470-residue polypeptide: Poly(A) polymerase catalytic subunit (470 aa).

Catalysis depends on residues D192 and D194.

Belongs to the poxviridae poly(A) polymerase catalytic subunit family. Heterodimer of a large (catalytic) subunit and a small (regulatory) subunit.

It carries out the reaction RNA(n) + ATP = RNA(n)-3'-adenine ribonucleotide + diphosphate. Polymerase that creates the 3'-poly(A) tail of mRNA's. This chain is Poly(A) polymerase catalytic subunit (PAPL), found in Myxoma virus (strain Lausanne) (MYXV).